Consider the following 343-residue polypeptide: Trace amine-associated receptor 3 (343 aa).

Residues 1–35 are Extracellular-facing; that stretch reads MDLIYIPEDLSSCPKFGNKSCPPTNRSFRVRMIMY. N-linked (GlcNAc...) asparagine glycosylation is found at Asn18 and Asn25. 2 disulfides stabilise this stretch: Cys21–Cys185 and Cys104–Cys189. The helical transmembrane segment at 36-56 threads the bilayer; it reads LFMTGAMVITIFGNLVIIISI. Topologically, residues 57–68 are cytoplasmic; the sequence is SHFKQLHSPTNF. The helical transmembrane segment at 69–89 threads the bilayer; the sequence is LILSMATTDFLLGFVIMPYSM. Residues 90-150 are Extracellular-facing; sequence VRSVESCWYF…TTMTVSMIKR (61 aa). A helical membrane pass occupies residues 151 to 168; that stretch reads LLAFCWAAPALFSFGLVL. Residues 169–172 are Cytoplasmic-facing; that stretch reads SEAN. The extracellular Loop 2 (ECL2) stretch occupies residues 173–186; that stretch reads VSGMQSYEILVACF. Residues 173 to 193 traverse the membrane as a helical segment; the sequence is VSGMQSYEILVACFNFCALTF. Topologically, residues 194 to 198 are extracellular; the sequence is NKFWG. The helical transmembrane segment at 199–223 threads the bilayer; the sequence is TILFTTCFFTPGSIMVGIYGKIFIV. Residues 224–257 are Cytoplasmic-facing; sequence SRRHARALSDMPANTKGAVGKNLSKKKDRKAAKT. A helical transmembrane segment spans residues 258 to 278; that stretch reads LGIVMGVFLACWLPCFLAVLI. Topologically, residues 279-287 are extracellular; it reads DPYLDYSTP. A helical transmembrane segment spans residues 288 to 308; sequence IIVLDLLVWLGYFNSTCNPLI. The Cytoplasmic portion of the chain corresponds to 309-343; it reads HGFFYPWFRKALQFIVSGKIFRSNSDTANLFPEAH.

It belongs to the G-protein coupled receptor 1 family. As to expression, specifically expressed in neurons of the olfactory epithelium.

The protein localises to the cell membrane. Olfactory receptor activated by several primary trace amines, including isoamylamine. Activated by isoamylamine and cyclohexylamine, but not to the corresponding alcohols, isoamylalcohol and cyclohexanol. This receptor is probably mediated by the G(s)-class of G-proteins which activate adenylate cyclase. The chain is Trace amine-associated receptor 3 from Mus musculus (Mouse).